We begin with the raw amino-acid sequence, 131 residues long: Ribonuclease VapC42 (131 aa).

The 125-residue stretch at 1-125 (MIVDTSAIVA…FRGDDFTHTD (125 aa)) folds into the PINc domain. Residues aspartate 4 and aspartate 100 each coordinate Mg(2+).

The protein belongs to the PINc/VapC protein family. Mg(2+) serves as cofactor.

Its function is as follows. Toxic component of a type II toxin-antitoxin (TA) system. An RNase. Its cognate antitoxin is VapB42. This chain is Ribonuclease VapC42, found in Mycobacterium tuberculosis (strain CDC 1551 / Oshkosh).